The chain runs to 189 residues: Protein jagunal homolog (189 aa).

The Cytoplasmic portion of the chain corresponds to 1–34; it reads MSSRGVRAAGTDGNDFQNRQRIAQHYQESAQYKS. A helical membrane pass occupies residues 35–55; sequence VLKWFFVPHFLILVFMWLKVG. Over 56–75 the chain is Lumenal; that stretch reads SEFLRYNFGWKNAFFERLDM. Residues 76–96 form a helical membrane-spanning segment; that stretch reads PAAYPWEYVWCLSFIPIVLAL. The Cytoplasmic portion of the chain corresponds to 97-105; sequence SSFQRNKLK. A helical transmembrane segment spans residues 106–126; the sequence is VLHYAYYAEFICGIFPCMIGL. At 127 to 150 the chain is on the lumenal side; the sequence is GGQLPELLEYANDMEGSNTPTFKG. Residues 151-171 form a helical membrane-spanning segment; it reads IFPMVIIWYIFFAVALQIHGF. At 172-189 the chain is on the cytoplasmic side; the sequence is SMYFMHHLAAAWAPVKRD.

The protein belongs to the jagunal family.

The protein localises to the endoplasmic reticulum membrane. The polypeptide is Protein jagunal homolog (Caenorhabditis briggsae).